A 303-amino-acid polypeptide reads, in one-letter code: Acetaldehyde dehydrogenase (303 aa).

13–16 (SGNI) is an NAD(+) binding site. The active-site Acyl-thioester intermediate is the cysteine 128. Residues 159–167 (SAGPGTRQN) and asparagine 278 each bind NAD(+).

The protein belongs to the acetaldehyde dehydrogenase family.

The enzyme catalyses acetaldehyde + NAD(+) + CoA = acetyl-CoA + NADH + H(+). The sequence is that of Acetaldehyde dehydrogenase from Chloroflexus aggregans (strain MD-66 / DSM 9485).